The following is a 358-amino-acid chain: Trans-anol O-methyltransferase 1 (358 aa).

Positions 201, 224, 244, 245, and 259 each coordinate S-adenosyl-L-methionine. H262 (proton acceptor) is an active-site residue.

This sequence belongs to the class I-like SAM-binding methyltransferase superfamily. Cation-independent O-methyltransferase family. COMT subfamily. As to expression, highly expressed in developing fruits. Expressed at low levels in roots, young leaves, buds and flowers.

It carries out the reaction (E)-anol + S-adenosyl-L-methionine = (E)-anethole + S-adenosyl-L-homocysteine + H(+). The catalysed reaction is (E)-isoeugenol + S-adenosyl-L-methionine = (E)-isomethyleugenol + S-adenosyl-L-homocysteine + H(+). The protein operates within aromatic compound metabolism; phenylpropanoid biosynthesis. Its activity is regulated as follows. Inhibited by zinc and copper. Its function is as follows. Phenylpropene O-methyltransferase that catalyzes the conversion of trans-anol to trans-anethole and isoeugenol to isomethyleugenol. Phenylpropenes are the primary constituents of various essential plant oils. They are produced as antimicrobial and antianimal compounds, or as floral attractants of pollinators. The protein is Trans-anol O-methyltransferase 1 (AIMT1) of Pimpinella anisum (Anise).